Here is a 412-residue protein sequence, read N- to C-terminus: Palmitoyltransferase ZDHHC6 (412 aa).

Over 1 to 24 (MNILSAIIVFENLHEVKRLFHWGP) the chain is Cytoplasmic. A helical membrane pass occupies residues 25–45 (IIALTVIGVCSSMAILDSIIW). Topologically, residues 46-57 (YWPLDTTGGSIN) are lumenal. The helical transmembrane segment at 58–78 (FIMLINWTVLILYNYFNAMFV) threads the bilayer. Over 79–143 (GPGYIPLEWK…NCCGHLNHAY (65 aa)) the chain is Cytoplasmic. Residues 99–149 (QFCRLCQGYKAPRSHHCRKCNRCVMKMDHHCPWINNCCGHLNHAYFTSFLL) enclose the DHHC domain. Cys129 acts as the S-palmitoyl cysteine intermediate in catalysis. Residues 144-164 (FTSFLLLAPLGCIHAALIFIM) traverse the membrane as a helical segment. The Lumenal portion of the chain corresponds to 165 to 205 (TMYTQLYDRISFGWSSVKIDMSAARHIHHPIMPFSIAAFAA). The helical transmembrane segment at 206 to 226 (TLFALGLALGTTIAVGMLFFI) threads the bilayer. Residues 227 to 412 (QMKVILRNRT…NSTSEEKKEQ (186 aa)) are Cytoplasmic-facing. The SH3 domain occupies 313-398 (QRSVEYRVVE…PRRCVEKCLY (86 aa)). 3 S-palmitoyl cysteine lipidation sites follow: Cys328, Cys329, and Cys343. Positions 409–412 (KKEQ) match the Di-lysine motif motif.

The protein belongs to the DHHC palmitoyltransferase family.

It is found in the endoplasmic reticulum membrane. It catalyses the reaction L-cysteinyl-[protein] + hexadecanoyl-CoA = S-hexadecanoyl-L-cysteinyl-[protein] + CoA. It carries out the reaction L-cysteinyl-[protein] + octadecanoyl-CoA = S-octadecanoyl-L-cysteinyl-[protein] + CoA. Functionally, endoplasmic reticulum palmitoyl acyltransferase that probably catalyzes the addition of palmitate onto various protein substrates and is involved in a variety of cellular processes. Could also function as a stearoyltransferase. The polypeptide is Palmitoyltransferase ZDHHC6 (Danio rerio (Zebrafish)).